The chain runs to 39 residues: Larval cuticle protein SC6 (39 aa).

The region spanning 15-39 is the Chitin-binding type R&amp;R domain; that stretch reads VDQFKYGLELDNSIKADQEGHLEGD.

Functionally, component of the cuticle of the larva of flesh fly. In Sarcophaga bullata (Grey flesh fly), this protein is Larval cuticle protein SC6.